The following is a 517-amino-acid chain: Cytochrome P450 1A1 (517 aa).

The interval 34–45 (WQPRVPKGLKSP) is mitochondrial targeting signal. O-linked (GlcNAc) serine glycosylation occurs at S72. F229 serves as a coordination point for substrate. C462 is a binding site for heme.

Belongs to the cytochrome P450 family. As to quaternary structure, interacts with cytosolic chaperones HSP70 and HSP90; this interaction is required for initial targeting to mitochondria. Interacts (via mitochondrial targeting signal) with TOMM40 (via N-terminus); this interaction is required for translocation across the mitochondrial outer membrane. The cofactor is heme.

It is found in the endoplasmic reticulum membrane. The protein localises to the mitochondrion inner membrane. The protein resides in the microsome membrane. It localises to the cytoplasm. It carries out the reaction an organic molecule + reduced [NADPH--hemoprotein reductase] + O2 = an alcohol + oxidized [NADPH--hemoprotein reductase] + H2O + H(+). It catalyses the reaction estrone + reduced [NADPH--hemoprotein reductase] + O2 = 2-hydroxyestrone + oxidized [NADPH--hemoprotein reductase] + H2O + H(+). The catalysed reaction is estrone + reduced [NADPH--hemoprotein reductase] + O2 = 4-hydroxyestrone + oxidized [NADPH--hemoprotein reductase] + H2O + H(+). The enzyme catalyses estrone + reduced [NADPH--hemoprotein reductase] + O2 = 6alpha-hydroxyestrone + oxidized [NADPH--hemoprotein reductase] + H2O + H(+). It carries out the reaction estrone + reduced [NADPH--hemoprotein reductase] + O2 = 15alpha-hydroxyestrone + oxidized [NADPH--hemoprotein reductase] + H2O + H(+). It catalyses the reaction estrone + reduced [NADPH--hemoprotein reductase] + O2 = 16alpha-hydroxyestrone + oxidized [NADPH--hemoprotein reductase] + H2O + H(+). The catalysed reaction is 17beta-estradiol + reduced [NADPH--hemoprotein reductase] + O2 = 2-hydroxy-17beta-estradiol + oxidized [NADPH--hemoprotein reductase] + H2O + H(+). The enzyme catalyses 17beta-estradiol + reduced [NADPH--hemoprotein reductase] + O2 = 4-hydroxy-17beta-estradiol + oxidized [NADPH--hemoprotein reductase] + H2O + H(+). It carries out the reaction 17beta-estradiol + reduced [NADPH--hemoprotein reductase] + O2 = 6alpha-hydroxy-17beta-estradiol + oxidized [NADPH--hemoprotein reductase] + H2O + H(+). It catalyses the reaction 17beta-estradiol + reduced [NADPH--hemoprotein reductase] + O2 = 7alpha-hydroxy-17beta-estradiol + oxidized [NADPH--hemoprotein reductase] + H2O + H(+). The catalysed reaction is 17beta-estradiol + reduced [NADPH--hemoprotein reductase] + O2 = 15alpha-hydroxy-17beta-estradiol + oxidized [NADPH--hemoprotein reductase] + H2O + H(+). The enzyme catalyses (5Z,8Z,11Z)-eicosatrienoate + reduced [NADPH--hemoprotein reductase] + O2 = 19-hydroxy-(5Z,8Z,11Z)-eicosatrienoate + oxidized [NADPH--hemoprotein reductase] + H2O + H(+). It carries out the reaction (5Z,8Z,11Z,14Z)-eicosatetraenoate + reduced [NADPH--hemoprotein reductase] + O2 = 16-hydroxy-(5Z,8Z,11Z,14Z)-eicosatetraenoate + oxidized [NADPH--hemoprotein reductase] + H2O + H(+). It catalyses the reaction (5Z,8Z,11Z,14Z)-eicosatetraenoate + reduced [NADPH--hemoprotein reductase] + O2 = 17-hydroxy-(5Z,8Z,11Z,14Z)-eicosatetraenoate + oxidized [NADPH--hemoprotein reductase] + H2O + H(+). The catalysed reaction is (5Z,8Z,11Z,14Z)-eicosatetraenoate + reduced [NADPH--hemoprotein reductase] + O2 = 18-hydroxy-(5Z,8Z,11Z,14Z)-eicosatetraenoate + oxidized [NADPH--hemoprotein reductase] + H2O + H(+). The enzyme catalyses (5Z,8Z,11Z,14Z)-eicosatetraenoate + reduced [NADPH--hemoprotein reductase] + O2 = 19-hydroxy-(5Z,8Z,11Z,14Z)-eicosatetraenoate + oxidized [NADPH--hemoprotein reductase] + H2O + H(+). It carries out the reaction (5Z,8Z,11Z,14Z,17Z)-eicosapentaenoate + reduced [NADPH--hemoprotein reductase] + O2 = 19-hydroxy-(5Z,8Z,11Z,14Z,17Z)-eicosapentaenoate + oxidized [NADPH--hemoprotein reductase] + H2O + H(+). It catalyses the reaction (5Z,8Z,11Z,14Z)-eicosatetraenoate + reduced [NADPH--hemoprotein reductase] + O2 = (8R,9S)-epoxy-(5Z,11Z,14Z)-eicosatrienoate + oxidized [NADPH--hemoprotein reductase] + H2O + H(+). The catalysed reaction is (5Z,8Z,11Z,14Z)-eicosatetraenoate + reduced [NADPH--hemoprotein reductase] + O2 = (11R,12S)-epoxy-(5Z,8Z,14Z)-eicosatrienoate + oxidized [NADPH--hemoprotein reductase] + H2O + H(+). The enzyme catalyses (5Z,8Z,11Z,14Z)-eicosatetraenoate + reduced [NADPH--hemoprotein reductase] + O2 = (14S,15R)-epoxy-(5Z,8Z,11Z)-eicosatrienoate + oxidized [NADPH--hemoprotein reductase] + H2O + H(+). It carries out the reaction (5Z,8Z,11Z,14Z)-eicosatetraenoate + reduced [NADPH--hemoprotein reductase] + O2 = (14R,15S)-epoxy-(5Z,8Z,11Z)-eicosatrienoate + oxidized [NADPH--hemoprotein reductase] + H2O + H(+). It catalyses the reaction (5Z,8Z,11Z,14Z,17Z)-eicosapentaenoate + reduced [NADPH--hemoprotein reductase] + O2 = (17R,18S)-epoxy-(5Z,8Z,11Z,14Z)-eicosatetraenoate + oxidized [NADPH--hemoprotein reductase] + H2O + H(+). The catalysed reaction is (4Z,7Z,10Z,13Z,16Z,19Z)-docosahexaenoate + reduced [NADPH--hemoprotein reductase] + O2 = (19S,20R)-epoxy-(4Z,7Z,10Z,13Z,16Z)-docosapentaenoate + oxidized [NADPH--hemoprotein reductase] + H2O + H(+). The enzyme catalyses (4Z,7Z,10Z,13Z,16Z,19Z)-docosahexaenoate + reduced [NADPH--hemoprotein reductase] + O2 = (19R,20S)-epoxy-(4Z,7Z,10Z,13Z,16Z)-docosapentaenoate + oxidized [NADPH--hemoprotein reductase] + H2O + H(+). It carries out the reaction all-trans-retinol + reduced [NADPH--hemoprotein reductase] + O2 = all-trans-retinal + oxidized [NADPH--hemoprotein reductase] + 2 H2O + H(+). It catalyses the reaction all-trans-retinal + reduced [NADPH--hemoprotein reductase] + O2 = all-trans-retinoate + oxidized [NADPH--hemoprotein reductase] + H2O + 2 H(+). The catalysed reaction is (13S)-hydroperoxy-(9Z,11E)-octadecadienoate = 13-oxo-(9Z,11E)-octadecadienoate + H2O. The enzyme catalyses (12S)-hydroperoxy-(5Z,8Z,10E,14Z)-eicosatetraenoate = 12-oxo-(5Z,8Z,10E,14Z)-eicosatetraenoate + H2O. It carries out the reaction (15S)-hydroperoxy-(5Z,8Z,11Z,13E)-eicosatetraenoate = 15-oxo-(5Z,8Z,11Z,13E)-eicosatetraenoate + H2O. It catalyses the reaction (5S)-hydroperoxy-(6E,8Z,11Z,14Z)-eicosatetraenoate = 5-oxo-(6E,8Z,11Z,14Z)-eicosatetraenoate + H2O. It participates in steroid hormone biosynthesis. The protein operates within lipid metabolism; fatty acid metabolism. It functions in the pathway cofactor metabolism; retinol metabolism. Its function is as follows. A cytochrome P450 monooxygenase involved in the metabolism of various endogenous substrates, including fatty acids, steroid hormones and vitamins. Mechanistically, uses molecular oxygen inserting one oxygen atom into a substrate, and reducing the second into a water molecule, with two electrons provided by NADPH via cytochrome P450 reductase (CPR; NADPH-ferrihemoprotein reductase). Catalyzes the hydroxylation of carbon-hydrogen bonds. Exhibits high catalytic activity for the formation of hydroxyestrogens from estrone (E1) and 17beta-estradiol (E2), namely 2-hydroxy E1 and E2, as well as D-ring hydroxylated E1 and E2 at the C15alpha and C16alpha positions. Displays different regioselectivities for polyunsaturated fatty acids (PUFA) hydroxylation. Catalyzes the epoxidation of double bonds of certain PUFA. Converts arachidonic acid toward epoxyeicosatrienoic acid (EET) regioisomers, 8,9-, 11,12-, and 14,15-EET, that function as lipid mediators in the vascular system. Displays an absolute stereoselectivity in the epoxidation of eicosapentaenoic acid (EPA) producing the 17(R),18(S) enantiomer. May play an important role in all-trans retinoic acid biosynthesis in extrahepatic tissues. Catalyzes two successive oxidative transformation of all-trans retinol to all-trans retinal and then to the active form all-trans retinoic acid. May also participate in eicosanoids metabolism by converting hydroperoxide species into oxo metabolites (lipoxygenase-like reaction, NADPH-independent). In Felis catus (Cat), this protein is Cytochrome P450 1A1 (CYP1A1).